Consider the following 125-residue polypeptide: Large ribosomal subunit protein bL12 (125 aa).

It belongs to the bacterial ribosomal protein bL12 family. In terms of assembly, homodimer. Part of the ribosomal stalk of the 50S ribosomal subunit. Forms a multimeric L10(L12)X complex, where L10 forms an elongated spine to which 2 to 4 L12 dimers bind in a sequential fashion. Binds GTP-bound translation factors.

Functionally, forms part of the ribosomal stalk which helps the ribosome interact with GTP-bound translation factors. Is thus essential for accurate translation. The chain is Large ribosomal subunit protein bL12 from Bradyrhizobium sp. (strain BTAi1 / ATCC BAA-1182).